The chain runs to 309 residues: 1,4-dihydroxy-2-naphthoyl-CoA synthase (309 aa).

Residues Arg-53, 98-102 (SGGDQ), Tyr-110, 152-156 (WAAGG), Thr-179, Ser-185, Tyr-282, and Lys-297 contribute to the substrate site.

Belongs to the enoyl-CoA hydratase/isomerase family. MenB subfamily.

The catalysed reaction is 2-succinylbenzoyl-CoA + H(+) = 1,4-dihydroxy-2-naphthoyl-CoA + H2O. Its pathway is quinol/quinone metabolism; 1,4-dihydroxy-2-naphthoate biosynthesis; 1,4-dihydroxy-2-naphthoate from chorismate: step 6/7. It participates in quinol/quinone metabolism; menaquinone biosynthesis. Converts o-succinylbenzoyl-CoA (OSB-CoA) to 1,4-dihydroxy-2-naphthoyl-CoA (DHNA-CoA). The protein is 1,4-dihydroxy-2-naphthoyl-CoA synthase of Mycolicibacterium smegmatis (strain ATCC 700084 / mc(2)155) (Mycobacterium smegmatis).